Here is a 507-residue protein sequence, read N- to C-terminus: Histidine ammonia-lyase (507 aa).

A cross-link (5-imidazolinone (Ala-Gly)) is located at residues 141–143 (ASG). At Ser-142 the chain carries 2,3-didehydroalanine (Ser).

This sequence belongs to the PAL/histidase family. Post-translationally, contains an active site 4-methylidene-imidazol-5-one (MIO), which is formed autocatalytically by cyclization and dehydration of residues Ala-Ser-Gly.

It localises to the cytoplasm. The catalysed reaction is L-histidine = trans-urocanate + NH4(+). Its pathway is amino-acid degradation; L-histidine degradation into L-glutamate; N-formimidoyl-L-glutamate from L-histidine: step 1/3. This chain is Histidine ammonia-lyase, found in Burkholderia orbicola (strain MC0-3).